A 223-amino-acid polypeptide reads, in one-letter code: 3,4-dihydroxy-2-butanone 4-phosphate synthase (223 aa).

Residues 47–48 (RE), aspartate 52, 160–164 (RRGHT), and glutamate 184 each bind D-ribulose 5-phosphate. Residue glutamate 48 participates in Mg(2+) binding. Histidine 163 is a Mg(2+) binding site.

Belongs to the DHBP synthase family. Homodimer. Mg(2+) is required as a cofactor. It depends on Mn(2+) as a cofactor.

The catalysed reaction is D-ribulose 5-phosphate = (2S)-2-hydroxy-3-oxobutyl phosphate + formate + H(+). Its pathway is cofactor biosynthesis; riboflavin biosynthesis; 2-hydroxy-3-oxobutyl phosphate from D-ribulose 5-phosphate: step 1/1. In terms of biological role, catalyzes the conversion of D-ribulose 5-phosphate to formate and 3,4-dihydroxy-2-butanone 4-phosphate. In Cupriavidus pinatubonensis (strain JMP 134 / LMG 1197) (Cupriavidus necator (strain JMP 134)), this protein is 3,4-dihydroxy-2-butanone 4-phosphate synthase.